Reading from the N-terminus, the 212-residue chain is Glycerol-3-phosphate acyltransferase (212 aa).

5 consecutive transmembrane segments (helical) span residues 5–25 (ALGMIIFAYLCGSISSAILVC), 53–73 (VAAAAVLVFDILKGMLPVWLA), 80–100 (PLYLGLTAIAACLGHIYPVFF), 112–132 (FGAIAPIGWDLTGLMTGTWLL), and 138–158 (GYSSLGAIISALIAPFYVWWF).

It belongs to the PlsY family. Probably interacts with PlsX.

Its subcellular location is the cell inner membrane. The catalysed reaction is an acyl phosphate + sn-glycerol 3-phosphate = a 1-acyl-sn-glycero-3-phosphate + phosphate. Its pathway is lipid metabolism; phospholipid metabolism. Its function is as follows. Catalyzes the transfer of an acyl group from acyl-phosphate (acyl-PO(4)) to glycerol-3-phosphate (G3P) to form lysophosphatidic acid (LPA). This enzyme utilizes acyl-phosphate as fatty acyl donor, but not acyl-CoA or acyl-ACP. The protein is Glycerol-3-phosphate acyltransferase of Serratia proteamaculans (strain 568).